The following is a 262-amino-acid chain: Small ribosomal subunit protein eS1 (262 aa).

This sequence belongs to the eukaryotic ribosomal protein eS1 family. As to quaternary structure, component of the small ribosomal subunit. Mature ribosomes consist of a small (40S) and a large (60S) subunit. The 40S subunit contains about 33 different proteins and 1 molecule of RNA (18S). The 60S subunit contains about 49 different proteins and 3 molecules of RNA (25S, 5.8S and 5S).

It localises to the cytoplasm. This Theileria parva (East coast fever infection agent) protein is Small ribosomal subunit protein eS1.